A 122-amino-acid polypeptide reads, in one-letter code: Urease subunit beta (122 aa).

Positions D102 to Q122 are disordered.

This sequence belongs to the urease beta subunit family. Heterotrimer of UreA (gamma), UreB (beta) and UreC (alpha) subunits. Three heterotrimers associate to form the active enzyme.

It is found in the cytoplasm. The enzyme catalyses urea + 2 H2O + H(+) = hydrogencarbonate + 2 NH4(+). Its pathway is nitrogen metabolism; urea degradation; CO(2) and NH(3) from urea (urease route): step 1/1. The polypeptide is Urease subunit beta (Paenarthrobacter aurescens (strain TC1)).